The primary structure comprises 514 residues: Peptide chain release factor 3 (514 aa).

Positions 8-268 (KKRRTFAIIS…TFLEFAPEPH (261 aa)) constitute a tr-type G domain. Residues 17–24 (SHPDAGKT), 85–89 (DTPGH), and 139–142 (NKLD) each bind GTP.

The protein belongs to the TRAFAC class translation factor GTPase superfamily. Classic translation factor GTPase family. PrfC subfamily.

The protein resides in the cytoplasm. In terms of biological role, increases the formation of ribosomal termination complexes and stimulates activities of RF-1 and RF-2. It binds guanine nucleotides and has strong preference for UGA stop codons. It may interact directly with the ribosome. The stimulation of RF-1 and RF-2 is significantly reduced by GTP and GDP, but not by GMP. This Streptococcus agalactiae serotype Ia (strain ATCC 27591 / A909 / CDC SS700) protein is Peptide chain release factor 3.